The primary structure comprises 102 residues: uncharacterized protein (102 aa).

The next 2 membrane-spanning stretches (helical) occupy residues 33–55 and 57–79; these read VLEL…LVVL and VVGV…VVVA.

The protein localises to the membrane. This is an uncharacterized protein from Saccharomyces cerevisiae (strain ATCC 204508 / S288c) (Baker's yeast).